An 804-amino-acid polypeptide reads, in one-letter code: uncharacterized protein (804 aa).

A run of 10 helical transmembrane segments spans residues 15–35 (LLIVWLALSLAVACVLALGNI), 243–263 (FLLLSALLTLLLAVAAVAVAM), 301–321 (LSAVTGGAIGLLFENVLMVLL), 333–353 (SLWPWLWALGTMTVISLLVGL), 381–401 (FYLPIVSVVVVLLLAGLMGGS), 403–423 (LLWAVLAGAVVLALLCGVLGW), 453–473 (TLSQLSAFSLSFMLLALLLVL), 680–700 (ALEVMVVLVTACGMLLLLAQV), 734–754 (MLGFVSGLVAAIGAETALAVL), and 769–789 (LWIVLPCSGALLLSLFGGWLG).

It belongs to the ABC-4 integral membrane protein family.

Its subcellular location is the cell membrane. This is an uncharacterized protein from Escherichia coli (strain K12).